We begin with the raw amino-acid sequence, 314 residues long: Homoserine kinase (314 aa).

An ATP-binding site is contributed by 95-105 (PHSRGLGSSAS).

This sequence belongs to the GHMP kinase family. Homoserine kinase subfamily.

It is found in the cytoplasm. The catalysed reaction is L-homoserine + ATP = O-phospho-L-homoserine + ADP + H(+). It participates in amino-acid biosynthesis; L-threonine biosynthesis; L-threonine from L-aspartate: step 4/5. Catalyzes the ATP-dependent phosphorylation of L-homoserine to L-homoserine phosphate. This Rhodococcus erythropolis (strain PR4 / NBRC 100887) protein is Homoserine kinase.